Reading from the N-terminus, the 287-residue chain is Glycine--tRNA ligase alpha subunit (287 aa).

It belongs to the class-II aminoacyl-tRNA synthetase family. As to quaternary structure, tetramer of two alpha and two beta subunits.

It localises to the cytoplasm. It carries out the reaction tRNA(Gly) + glycine + ATP = glycyl-tRNA(Gly) + AMP + diphosphate. The polypeptide is Glycine--tRNA ligase alpha subunit (Campylobacter jejuni (strain RM1221)).